Consider the following 1058-residue polypeptide: Bromodomain-containing protein 1 (1058 aa).

Basic residues predominate over residues 1–12; sequence MRRKGRCHRGSA. Residues 1-26 form a disordered region; it reads MRRKGRCHRGSAARHPSSPCSVKHSP. The segment at 31–80 is interaction with KAT7/HBO1 and histones; it reads LTYAQAQRMVEIEIEGRLHRISIFDPLEIILEDDLTAQEMSECNSNKENS. Residues 92–116 are disordered; sequence HKNNRVKKKNEALPSAHGTPASASA. S128 carries the phosphoserine modification. A PHD-type 1 zinc finger spans residues 214-264; the sequence is DAVCCICMDGECQNSNVILFCDMCNLAVHQECYGVPYIPEGQWLCRHCLQS. The C2HC pre-PHD-type zinc-finger motif lies at 268-301; that stretch reads PADCVLCPNKGGAFKKTDDDRWGHVVCALWIPEV. Residues 325–389 form a PHD-type 2 zinc finger; that stretch reads LTCYLCKQKG…RKTAYCDVHT (65 aa). Residues K368, K516, and K519 each carry the N6-acetyllysine modification. Residues K554 and K594 each participate in a glycyl lysine isopeptide (Lys-Gly) (interchain with G-Cter in SUMO2) cross-link. Positions 562–666 constitute a Bromo domain; sequence LRLTPLTVLL…DQGGVVLRQA (105 aa). Disordered stretches follow at residues 755–776 and 791–868; these read LSQQ…EEDG and LETL…DSSF. S803 is subject to Phosphoserine. The span at 852–867 shows a compositional bias: low complexity; the sequence is SESSISSSNSPLCDSS. An N6-acetyllysine modification is found at K903. At R906 the chain carries Phosphoserine. A PWWP domain is found at 929–1012; that stretch reads PLKVVWAKCS…KSKMVPLGID (84 aa). S1052 and S1055 each carry phosphoserine.

In terms of assembly, component of some HBO1 complex composed of KAT7/HBO1, MEAF6, ING4 and BRD1/BRPF2. Component of the MOZ/MORF complex composed at least of ING5, KAT6A, KAT6B, MEAF6 and one of BRPF1, BRD1/BRPF2 and BRPF3. Interacts (via PHD-type zinc finger domain) with unmodified histone H3. Interacts (via PWWP domain) with dimethylated and trimethylated 'Lys-79' on histone H3. In terms of tissue distribution, highly expressed in testis.

The protein localises to the nucleus. It is found in the chromosome. Scaffold subunit of various histone acetyltransferase (HAT) complexes, such as the MOZ/MORF and HBO1 complexes, that acts as a regulator of hematopoiesis. Plays a key role in HBO1 complex by directing KAT7/HBO1 specificity towards histone H3 'Lys-14' acetylation (H3K14ac), thereby promoting erythroid differentiation. In Homo sapiens (Human), this protein is Bromodomain-containing protein 1.